The chain runs to 126 residues: Holo-[acyl-carrier-protein] synthase (126 aa).

Mg(2+) contacts are provided by D8 and E57.

Belongs to the P-Pant transferase superfamily. AcpS family. Requires Mg(2+) as cofactor.

The protein localises to the cytoplasm. The catalysed reaction is apo-[ACP] + CoA = holo-[ACP] + adenosine 3',5'-bisphosphate + H(+). Its function is as follows. Transfers the 4'-phosphopantetheine moiety from coenzyme A to a Ser of acyl-carrier-protein. The protein is Holo-[acyl-carrier-protein] synthase of Vibrio cholerae serotype O1 (strain ATCC 39315 / El Tor Inaba N16961).